A 241-amino-acid polypeptide reads, in one-letter code: Terpene cyclase olcD (241 aa).

Transmembrane regions (helical) follow at residues 19-39, 49-71, 76-95, 108-128, 137-157, 166-186, and 202-222; these read LSDILLVTLASGWLVCYFATI, WMPLLPLSCNVAWELVFITLYPP, ILGFWLLVNLGVIYSALRFA, YLPVLFVLAVGFWAWGHLALI, FYYGGMACQLMTSAAALSGLV, SYTIWLSRVIGTSSALAGLFF, and LMRWLAAAFGILDGVYGVQFW.

This sequence belongs to the paxB family.

The protein resides in the membrane. The protein operates within secondary metabolite biosynthesis; terpenoid biosynthesis. Terpene cyclase; part of the gene cluster that mediates the biosynthesis of 15-deoxyoxalicine B. The first step of the pathway is the synthesis of nicotinyl-CoA from nicotinic acid by the nicotinic acid-CoA ligase olcI. Nicotinyl-CoA is then a substrate of polyketide synthase olcA to produce 4-hydroxy-6-(3-pyridinyl)-2H-pyran-2-one (HPPO) which is further prenylated by the polyprenyl transferase olcH to yield geranylgeranyl-HPPO. Geranylgeranyl pyrophosphate is provided by the cluster-specific geranylgeranyl pyrophosphate synthase olcC. The FAD-dependent monooxygenase olcE catalyzes the epoxidation of geranylgeranyl-HPPO and the terpene cyclase olcD catalyzes the cyclization of the terpenoid component, resulting in the formation of the tricyclic terpene moiety seen in predecaturin E. The cytochrome P450 monooxygenase then catalyzes the allylic oxidation of predecaturin E, which is followed by spirocylization with concomitant loss of one molecule of water to form decaturin E. Decaturin E is the substrate of the cytochrome P450 monooxygenase olcJ which hydroxylates it at the C-29 position to form decaturin F. The short-chain dehydrogenase/reductase olcF may catalyze the oxidation of decaturin F to generate the 29-hydroxyl-27-one intermediate, and subsequent hemiacetal formation probably leads to the formation of decaturin C. The dioxygenase olcK may be a peroxisomal enzyme that catalyzes the hydroxylation of decaturin C into decaturin A once decaturin C is shuttled into the peroxisome by the MFS transporter olcL. Finally the cytochrome P450 monooxygenase olcB catalyzes the oxidative rearrangement to yield 15-deoxyoxalicine B. In the absence of olcJ, decaturin E may be shunted to a pathway in which it is oxidized to a ketone, possibly by olcF, to form decaturin D, which undergoes further allylic oxidation to yield decaturin G. Moreover, in the absence of oclK or oclL, oclB can convert decaturin C into 15-deoxyoxalicine A. The chain is Terpene cyclase olcD from Penicillium canescens.